Here is a 235-residue protein sequence, read N- to C-terminus: Elongation factor Tu (235 aa).

One can recognise a tr-type G domain in the interval 1 to 125 (KNMITGATQM…DGDKYIPTPS (125 aa)). Residue 47 to 50 (NKQD) coordinates GTP.

Belongs to the TRAFAC class translation factor GTPase superfamily. Classic translation factor GTPase family. EF-Tu/EF-1A subfamily. As to quaternary structure, monomer.

Its subcellular location is the cytoplasm. It catalyses the reaction GTP + H2O = GDP + phosphate + H(+). In terms of biological role, GTP hydrolase that promotes the GTP-dependent binding of aminoacyl-tRNA to the A-site of ribosomes during protein biosynthesis. The protein is Elongation factor Tu (tufA) of Leptolyngbya boryana (Plectonema boryanum).